The primary structure comprises 299 residues: 33 kDa chaperonin (299 aa).

Intrachain disulfides connect cysteine 238/cysteine 240 and cysteine 271/cysteine 274.

It belongs to the HSP33 family. Post-translationally, under oxidizing conditions two disulfide bonds are formed involving the reactive cysteines. Under reducing conditions zinc is bound to the reactive cysteines and the protein is inactive.

It is found in the cytoplasm. In terms of biological role, redox regulated molecular chaperone. Protects both thermally unfolding and oxidatively damaged proteins from irreversible aggregation. Plays an important role in the bacterial defense system toward oxidative stress. The polypeptide is 33 kDa chaperonin (Alkaliphilus oremlandii (strain OhILAs) (Clostridium oremlandii (strain OhILAs))).